The primary structure comprises 448 residues: Maintenance of mitochondrial morphology protein 1 (448 aa).

The Lumenal portion of the chain corresponds to 1 to 74 (MTESVIYSGT…LNHTWSFTQG (74 aa)). A helical transmembrane segment spans residues 75 to 95 (LVVGQLSVIVVVAIFIKFFVF). Residues 96 to 448 (ADSSATTTTT…IVDKTEEASI (353 aa)) lie on the Cytoplasmic side of the membrane. Disordered stretches follow at residues 119–144 (RNKNVRGTSNEDKDPNNNKEDDLNSP) and 303–357 (LQNV…SQED). A compositionally biased stretch (basic and acidic residues) spans 127-140 (SNEDKDPNNNKEDD). The region spanning 164–419 (SPESLDWFNV…EPRFQVVKVP (256 aa)) is the SMP-LTD domain. Over residues 313-332 (PSNEPNSQNQTQQPTPVNNS) the composition is skewed to low complexity. Residues 345 to 356 (ETKHSKAKRSQE) are compositionally biased toward basic and acidic residues.

It belongs to the MMM1 family. As to quaternary structure, homodimer. Component of the ER-mitochondria encounter structure (ERMES) or MDM complex, composed of MMM1, MDM10, MDM12 and MDM34. An MMM1 homodimer associates with one molecule of MDM12 on each side in a pairwise head-to-tail manner, and the SMP-LTD domains of MMM1 and MDM12 generate a continuous hydrophobic tunnel for phospholipid trafficking.

The protein localises to the endoplasmic reticulum membrane. In terms of biological role, component of the ERMES/MDM complex, which serves as a molecular tether to connect the endoplasmic reticulum (ER) and mitochondria. Components of this complex are involved in the control of mitochondrial shape and protein biogenesis, and function in nonvesicular lipid trafficking between the ER and mitochondria. The MDM12-MMM1 subcomplex functions in the major beta-barrel assembly pathway that is responsible for biogenesis of all outer membrane beta-barrel proteins, and acts in a late step after the SAM complex. The MDM10-MDM12-MMM1 subcomplex further acts in the TOM40-specific pathway after the action of the MDM12-MMM1 complex. Essential for establishing and maintaining the structure of mitochondria and maintenance of mtDNA nucleoids. The sequence is that of Maintenance of mitochondrial morphology protein 1 from Debaryomyces hansenii (strain ATCC 36239 / CBS 767 / BCRC 21394 / JCM 1990 / NBRC 0083 / IGC 2968) (Yeast).